A 680-amino-acid polypeptide reads, in one-letter code: DNA ligase (680 aa).

NAD(+)-binding positions include 44 to 48 (DYIYD), 94 to 95 (SL), and glutamate 124. Lysine 126 serves as the catalytic N6-AMP-lysine intermediate. NAD(+) contacts are provided by arginine 147, glutamate 181, lysine 297, and lysine 321. 4 residues coordinate Zn(2+): cysteine 415, cysteine 418, cysteine 433, and cysteine 438. In terms of domain architecture, BRCT spans 598-680 (DENSFFYGKK…VDEQVKEDGK (83 aa)).

It belongs to the NAD-dependent DNA ligase family. LigA subfamily. Mg(2+) is required as a cofactor. It depends on Mn(2+) as a cofactor.

The catalysed reaction is NAD(+) + (deoxyribonucleotide)n-3'-hydroxyl + 5'-phospho-(deoxyribonucleotide)m = (deoxyribonucleotide)n+m + AMP + beta-nicotinamide D-nucleotide.. Functionally, DNA ligase that catalyzes the formation of phosphodiester linkages between 5'-phosphoryl and 3'-hydroxyl groups in double-stranded DNA using NAD as a coenzyme and as the energy source for the reaction. It is essential for DNA replication and repair of damaged DNA. The protein is DNA ligase of Leuconostoc mesenteroides subsp. mesenteroides (strain ATCC 8293 / DSM 20343 / BCRC 11652 / CCM 1803 / JCM 6124 / NCDO 523 / NBRC 100496 / NCIMB 8023 / NCTC 12954 / NRRL B-1118 / 37Y).